The primary structure comprises 431 residues: Keratin, type I cytoskeletal 40 (431 aa).

The interval 1–89 (MASDCSPTGC…CEDGVFNSNE (89 aa)) is head. An IF rod domain is found at 89–400 (EKETMQFLND…GLLDSEDSRL (312 aa)). Residues 90-124 (KETMQFLNDRLASYLEKVRGLEELNAELECRIREQ) are coil 1A. The segment at 125–135 (CEEDVPLVCPD) is linker 1. A coil 1B region spans residues 136 to 236 (YQCYFDTIED…HEEEVNVLRG (101 aa)). The segment at 237 to 252 (QLGDRLSVELDTAPTT) is linker 12. Positions 253–396 (DLNRVLDEMR…NTYQGLLDSE (144 aa)) are coil 2. The segment at 397 to 431 (DSRLPCNPCSATSMSNDTCEPCSAYVICTVENSCP) is tail.

The protein belongs to the intermediate filament family. Heterotetramer of two type I and two type II keratins.

In terms of biological role, may play a role in late hair differentiation. This is Keratin, type I cytoskeletal 40 (KRT40) from Bos taurus (Bovine).